A 140-amino-acid chain; its full sequence is Hemoglobin subunit beta (140 aa).

The Globin domain occupies 1 to 140; the sequence is GGSDVSAFLA…VGEALAKGYH (140 aa). The heme b site is built by H57 and H86.

This sequence belongs to the globin family. As to quaternary structure, heterotetramer of either two alpha-B chains or two alpha-C chains and two beta chains.

The beta chain is a component of adult hemoglobins B. And C. The protein is Hemoglobin subunit beta (HBB) of Aquarana catesbeiana (American bullfrog).